We begin with the raw amino-acid sequence, 558 residues long: 2-isopropylmalate synthase (558 aa).

The region spanning 30-303 (PIWCSVDLRD…DPELDCRDIE (274 aa)) is the Pyruvate carboxyltransferase domain. Mg(2+)-binding residues include aspartate 39, histidine 242, histidine 244, and asparagine 278. Residues 437–558 (QPNARIKFVD…ANRVLEERAK (122 aa)) are regulatory domain.

This sequence belongs to the alpha-IPM synthase/homocitrate synthase family. LeuA type 2 subfamily. As to quaternary structure, homodimer. Mg(2+) is required as a cofactor.

It localises to the cytoplasm. The catalysed reaction is 3-methyl-2-oxobutanoate + acetyl-CoA + H2O = (2S)-2-isopropylmalate + CoA + H(+). It functions in the pathway amino-acid biosynthesis; L-leucine biosynthesis; L-leucine from 3-methyl-2-oxobutanoate: step 1/4. Its function is as follows. Catalyzes the condensation of the acetyl group of acetyl-CoA with 3-methyl-2-oxobutanoate (2-ketoisovalerate) to form 3-carboxy-3-hydroxy-4-methylpentanoate (2-isopropylmalate). The sequence is that of 2-isopropylmalate synthase from Agrobacterium fabrum (strain C58 / ATCC 33970) (Agrobacterium tumefaciens (strain C58)).